We begin with the raw amino-acid sequence, 276 residues long: 1-(5-phosphoribosyl)-5-[(5-phosphoribosylamino)methylideneamino] imidazole-4-carboxamide isomerase (276 aa).

This sequence belongs to the HisA/HisF family.

The protein resides in the cytoplasm. It carries out the reaction 1-(5-phospho-beta-D-ribosyl)-5-[(5-phospho-beta-D-ribosylamino)methylideneamino]imidazole-4-carboxamide = 5-[(5-phospho-1-deoxy-D-ribulos-1-ylimino)methylamino]-1-(5-phospho-beta-D-ribosyl)imidazole-4-carboxamide. The protein operates within amino-acid biosynthesis; L-histidine biosynthesis; L-histidine from 5-phospho-alpha-D-ribose 1-diphosphate: step 4/9. This is 1-(5-phosphoribosyl)-5-[(5-phosphoribosylamino)methylideneamino] imidazole-4-carboxamide isomerase (HIS6) from Debaryomyces hansenii (strain ATCC 36239 / CBS 767 / BCRC 21394 / JCM 1990 / NBRC 0083 / IGC 2968) (Yeast).